The chain runs to 144 residues: Small ribosomal subunit protein bS6 (144 aa).

Positions 95 to 144 are disordered; sequence ELEEGPSAMMQSKSRDDRPRRGEGDDRPRRDDREDRPRRDREPRRMEGGE. Over residues 107–144 the composition is skewed to basic and acidic residues; the sequence is KSRDDRPRRGEGDDRPRRDDREDRPRRDREPRRMEGGE.

Belongs to the bacterial ribosomal protein bS6 family.

Functionally, binds together with bS18 to 16S ribosomal RNA. This is Small ribosomal subunit protein bS6 from Paramagnetospirillum magneticum (strain ATCC 700264 / AMB-1) (Magnetospirillum magneticum).